The sequence spans 506 residues: 7,8-dihydro-6-hydroxymethylpterin dimethyltransferase (506 aa).

[4Fe-4S] cluster-binding residues include Cys73, Cys77, Cys80, Cys98, Cys102, and Cys105. Positions 82-300 constitute a Radical SAM core domain; the sequence is NHKSTTILAN…FIKLVEEQTD (219 aa).

Belongs to the radical SAM superfamily. Requires [4Fe-4S] cluster as cofactor. It depends on S-adenosyl-L-methionine as a cofactor.

It participates in cofactor biosynthesis; 5,6,7,8-tetrahydromethanopterin biosynthesis. Functionally, is responsible for the addition of methyl groups at C-7 and C-9 of the pterin ring during methanopterin (MPT) biosynthesis. Catalyzes methylation of 7,8-dihydro-6-hydroxymethylpterin, likely using methylenetetrahydromethanopterin as a methyl group donor, via a radical-based mechanism. The protein is 7,8-dihydro-6-hydroxymethylpterin dimethyltransferase of Methanocaldococcus jannaschii (strain ATCC 43067 / DSM 2661 / JAL-1 / JCM 10045 / NBRC 100440) (Methanococcus jannaschii).